The following is an 89-amino-acid chain: uncharacterized protein (89 aa).

A topological domain (cytoplasmic) is located at residue methionine 1. A helical transmembrane segment spans residues 2-22 (LFEIIYIVSSLFYIVSIIYTL). Over 23–89 (MRIKHINTVA…ELKKSKLCEG (67 aa)) the chain is Extracellular.

It is found in the host membrane. This is an uncharacterized protein from Sulfolobus islandicus filamentous virus (isolate Iceland/Hveragerdi) (SIFV).